The following is a 982-amino-acid chain: Collagen alpha-1(I) chain (982 aa).

The interval 1–982 (GPMGPSGPRG…PGAPGPPGPP (982 aa)) is disordered. The segment covering 8-27 (PRGFQGPPGEPGEPGASGPM) has biased composition (low complexity). Over residues 39–53 (NGDDGEAGKPGRPGE) the composition is skewed to basic and acidic residues. Ser-81 carries the post-translational modification Phosphoserine. 2 stretches are compositionally biased toward low complexity: residues 89–105 (DAGP…PGEN) and 128–141 (PAGA…TGAA). A compositionally biased stretch (pro residues) spans 143 to 155 (PPGPTGPAGPPGF). Residues 189 to 228 (AGAAGPAGNPGADGQPGAKGANGAPGIAGAPGFPGARGPS) are compositionally biased toward low complexity. Positions 294–303 (GERGGPGSRG) are enriched in gly residues. Composition is skewed to low complexity over residues 304–335 (FPGA…PGEA), 347–373 (KGIT…QDGR), 382–401 (ARGQ…AGEP), 425–437 (AGAQ…AGPA), 513–526 (APGA…PGIQ), 583–597 (SGPS…ARGA), 610–640 (AGFA…AGPA), 666–682 (SAGP…AGRV), and 727–751 (AGEK…QGIA). Ser-586 is subject to Phosphoserine. Composition is skewed to pro residues over residues 792 to 802 (PPGPIGPPGIA) and 838 to 853 (AGPP…PGPV). Over residues 874 to 888 (IGPTGARGPAGPQGP) the composition is skewed to low complexity. Residues 889 to 900 (RGDKGETGEQGD) are compositionally biased toward basic and acidic residues. Residues 916–940 (PGEQGPAGASGPAGPRGPPGSAGAP) are compositionally biased toward low complexity. Residues 966–982 (PRGPPGPPGAPGPPGPP) are compositionally biased toward pro residues.

The protein belongs to the fibrillar collagen family. As to quaternary structure, trimers of one alpha 2(I) and two alpha 1(I) chains. Post-translationally, prolines at the third position of the tripeptide repeating unit (G-X-Y) are hydroxylated in some or all of the chains. As to expression, forms the fibrils of tendon, ligaments and bones. In bones, the fibrils are mineralized with calcium hydroxyapatite.

Its subcellular location is the secreted. It is found in the extracellular space. The protein localises to the extracellular matrix. Type I collagen is a member of group I collagen (fibrillar forming collagen). The sequence is that of Collagen alpha-1(I) chain from Toxodon sp.